A 425-amino-acid chain; its full sequence is Synaptotagmin-4 (425 aa).

At 1–16 (MAPITTSRVEFDEIPT) the chain is on the vesicular side. Residues 17–37 (VVGIFSAFGLVFTVSLFAWIC) form a helical membrane-spanning segment. Topologically, residues 38-425 (CQRRSAKSNK…IAKWHMLCDG (388 aa)) are cytoplasmic. Residues 127-147 (TETEKEANSPESLKSSTSLTS) are disordered. Ser-135 carries the phosphoserine; by MAPK8 modification. Residues 137–146 (ESLKSSTSLT) show a composition bias toward low complexity. C2 domains are found at residues 153–274 (KLGT…MLMT) and 287–420 (GRGE…AKWH). Ca(2+) contacts are provided by Asp-246, Ser-249, and Asp-252.

Belongs to the synaptotagmin family. In terms of assembly, interacts with KIF1A; the interaction increases in presence of calcium and decreases when SYT4 is phosphorylated at Ser-135. Requires Ca(2+) as cofactor. In terms of processing, phosphorylation at Ser-135 by MAPK8/JNK1 reduces interaction with KIF1A and neuronal dense core vesicles mobility. In terms of tissue distribution, expressed in many regions of the nervous system but is undetectable in extra neural tissues.

The protein localises to the cytoplasmic vesicle. It is found in the secretory vesicle. The protein resides in the neuronal dense core vesicle membrane. In terms of biological role, synaptotagmin family member which does not bind Ca(2+). Plays a role in dendrite formation by melanocytes. Functionally, synaptotagmin family member which does not bind Ca(2+). Involved in neuronal dense core vesicles (DCVs) mobility through its interaction with KIF1A. Upon increased neuronal activity, phosphorylation by MAPK8/JNK1 destabilizes the interaction with KIF1A and captures DCVs to synapses. Plays a role in dendrite formation by melanocytes. This chain is Synaptotagmin-4 (Syt4), found in Mus musculus (Mouse).